A 75-amino-acid polypeptide reads, in one-letter code: MATKKKTFEEAIAELETIVEALENGSASLEDSLDMYQKGIELTKLCQDKLQTAEKRMAKVVTDTGEEIPFEADGE.

Belongs to the XseB family. Heterooligomer composed of large and small subunits.

The protein resides in the cytoplasm. It catalyses the reaction Exonucleolytic cleavage in either 5'- to 3'- or 3'- to 5'-direction to yield nucleoside 5'-phosphates.. Its function is as follows. Bidirectionally degrades single-stranded DNA into large acid-insoluble oligonucleotides, which are then degraded further into small acid-soluble oligonucleotides. The polypeptide is Exodeoxyribonuclease 7 small subunit (Listeria welshimeri serovar 6b (strain ATCC 35897 / DSM 20650 / CCUG 15529 / CIP 8149 / NCTC 11857 / SLCC 5334 / V8)).